The following is a 615-amino-acid chain: UvrABC system protein C (615 aa).

The GIY-YIG domain maps to 14–91 (TSPGCYIHKD…IKENKPKYNI (78 aa)). Positions 196–231 (NKIIDELKGKMAAAAQTMEFERAAEYRDLIQAIGTL) constitute a UVR domain.

The protein belongs to the UvrC family. Interacts with UvrB in an incision complex.

The protein localises to the cytoplasm. In terms of biological role, the UvrABC repair system catalyzes the recognition and processing of DNA lesions. UvrC both incises the 5' and 3' sides of the lesion. The N-terminal half is responsible for the 3' incision and the C-terminal half is responsible for the 5' incision. The sequence is that of UvrABC system protein C from Streptococcus pneumoniae (strain ATCC 700669 / Spain 23F-1).